A 205-amino-acid chain; its full sequence is MLSTDFEYPLWESLSQVCGIDEAGRGPLAGPVVAAAVVFPRHFRPTGIFAKLDDSKKLTAELRDELALAIRESAESWALGVVDAETIDRINILQATMLAMNLAVESLGSTPEFLLVDGNRFRPVLPIPYQTIVKGDSKVFSIAAASVLAKTHRDELMTTSAAEYPEYGFEVHFGYPTARHVEAIARHGRCAIHRQSFKLRKLGEK.

Positions 15–205 constitute an RNase H type-2 domain; it reads SQVCGIDEAG…SFKLRKLGEK (191 aa). A divalent metal cation contacts are provided by Asp21, Glu22, and Asp117.

It belongs to the RNase HII family. Requires Mn(2+) as cofactor. The cofactor is Mg(2+).

The protein localises to the cytoplasm. The catalysed reaction is Endonucleolytic cleavage to 5'-phosphomonoester.. Endonuclease that specifically degrades the RNA of RNA-DNA hybrids. In Chlorobaculum tepidum (strain ATCC 49652 / DSM 12025 / NBRC 103806 / TLS) (Chlorobium tepidum), this protein is Ribonuclease HII.